Here is a 476-residue protein sequence, read N- to C-terminus: UDP-N-acetylmuramate--L-alanine ligase (476 aa).

107-113 contributes to the ATP binding site; the sequence is GTHGKTT.

It belongs to the MurCDEF family.

Its subcellular location is the cytoplasm. It catalyses the reaction UDP-N-acetyl-alpha-D-muramate + L-alanine + ATP = UDP-N-acetyl-alpha-D-muramoyl-L-alanine + ADP + phosphate + H(+). It functions in the pathway cell wall biogenesis; peptidoglycan biosynthesis. Its function is as follows. Cell wall formation. This Roseiflexus castenholzii (strain DSM 13941 / HLO8) protein is UDP-N-acetylmuramate--L-alanine ligase.